We begin with the raw amino-acid sequence, 286 residues long: Probable endonuclease 4 (286 aa).

His-67, His-107, Glu-144, Asp-178, His-181, His-215, Asp-228, His-230, and Glu-260 together coordinate Zn(2+).

It belongs to the AP endonuclease 2 family. The cofactor is Zn(2+).

It carries out the reaction Endonucleolytic cleavage to 5'-phosphooligonucleotide end-products.. In terms of biological role, endonuclease IV plays a role in DNA repair. It cleaves phosphodiester bonds at apurinic or apyrimidinic (AP) sites, generating a 3'-hydroxyl group and a 5'-terminal sugar phosphate. This is Probable endonuclease 4 from Chloroflexus aggregans (strain MD-66 / DSM 9485).